Consider the following 86-residue polypeptide: MAHKKGTGSTRNGRDSNSKRLGVKAYGGEKVTAGSILIRQRGTSFLPGINVGKGKDDTLFALKEGTVSFESIKRNLRNRKRVNVVI.

A disordered region spans residues 1–24 (MAHKKGTGSTRNGRDSNSKRLGVK).

Belongs to the bacterial ribosomal protein bL27 family.

This Prochlorococcus marinus (strain MIT 9312) protein is Large ribosomal subunit protein bL27.